The following is a 329-amino-acid chain: Interleukin-12 subunit beta (329 aa).

A signal peptide spans 1-22; the sequence is MCHQWLVLSWFSLVLLASPLMA. Residues 29-106 form the Ig-like C2-type domain; it reads DVYVVELDWY…LSHSHLLLHK (78 aa). An intrachain disulfide couples Cys50 to Cys90. Residues Asn125, Asn135, and Asn223 are each glycosylated (N-linked (GlcNAc...) asparagine). The region spanning 238-329 is the Fibronectin type-III domain; sequence PPKNLQLKPL…WSEWASVSCS (92 aa).

The protein belongs to the IL-12B family. Heterodimer with IL12A; disulfide-linked. The heterodimer is known as interleukin IL-12. Heterodimer with IL23A; disulfide-linked. The heterodimer is known as interleukin IL-23. Also secreted as a monomer. Interacts with NBR1; this interaction promotes IL-12 secretion.

It is found in the secreted. In terms of biological role, cytokine that can act as a growth factor for activated T and NK cells, enhance the lytic activity of NK/lymphokine-activated killer cells, and stimulate the production of IFN-gamma by resting PBMC. Associates with IL23A to form the IL-23 interleukin, a heterodimeric cytokine which functions in innate and adaptive immunity. IL-23 may constitute with IL-17 an acute response to infection in peripheral tissues. IL-23 binds to a heterodimeric receptor complex composed of IL12RB1 and IL23R, activates the Jak-Stat signaling cascade, stimulates memory rather than naive T-cells and promotes production of pro-inflammatory cytokines. IL-23 induces autoimmune inflammation and thus may be responsible for autoimmune inflammatory diseases and may be important for tumorigenesis. This chain is Interleukin-12 subunit beta (IL12B), found in Equus caballus (Horse).